The following is a 322-amino-acid chain: 2-oxoglutarate-dependent dioxygenase caaD (322 aa).

One can recognise a Fe2OG dioxygenase domain in the interval 172 to 279 (TGNAAMFLKL…FAVPAFWHGD (108 aa)). Residues His-200, Asp-202, and His-259 each contribute to the Fe cation site. Arg-269 is a binding site for 2-oxoglutarate.

This sequence belongs to the iron/ascorbate-dependent oxidoreductase family. Fe(2+) serves as cofactor.

It participates in secondary metabolite biosynthesis. 2-oxoglutarate-dependent dioxygenase; part of the gene cluster that produces the acyltetronic acid derivatives carlosic acid, agglomerin F and carlosic acid methyl ether. CaaD catalyzes the sequential oxidations of the terminal C-10 methyl group of the caaC product to form carboxylic acid which is necessary for the biosynthesis of agglomerin F. The protein is 2-oxoglutarate-dependent dioxygenase caaD of Aspergillus niger (strain ATCC MYA-4892 / CBS 513.88 / FGSC A1513).